Consider the following 319-residue polypeptide: Malate dehydrogenase (319 aa).

NAD(+) contacts are provided by residues 10–15 (GAGNIG) and Asp34. Residues Arg83 and Arg89 each coordinate substrate. NAD(+) contacts are provided by residues Asn96 and 119 to 121 (ITN). Asn121 and Arg152 together coordinate substrate. The active-site Proton acceptor is the His176.

It belongs to the LDH/MDH superfamily. MDH type 3 family.

It carries out the reaction (S)-malate + NAD(+) = oxaloacetate + NADH + H(+). Its function is as follows. Catalyzes the reversible oxidation of malate to oxaloacetate. The sequence is that of Malate dehydrogenase from Francisella tularensis subsp. tularensis (strain FSC 198).